Consider the following 297-residue polypeptide: Glycine--tRNA ligase alpha subunit (297 aa).

Belongs to the class-II aminoacyl-tRNA synthetase family. As to quaternary structure, tetramer of two alpha and two beta subunits.

It is found in the cytoplasm. The catalysed reaction is tRNA(Gly) + glycine + ATP = glycyl-tRNA(Gly) + AMP + diphosphate. The chain is Glycine--tRNA ligase alpha subunit (glyQ) from Halalkalibacterium halodurans (strain ATCC BAA-125 / DSM 18197 / FERM 7344 / JCM 9153 / C-125) (Bacillus halodurans).